The following is a 194-amino-acid chain: Probable GTP-binding protein EngB (194 aa).

Positions 22–194 (LFLEVAFAGR…WQELDTMLNP (173 aa)) constitute an EngB-type G domain. GTP is bound by residues 30–37 (GRSNVGKS), 57–61 (GCTQL), 75–78 (DLPG), 142–145 (TKAD), and 173–175 (FSS). Residues serine 37 and threonine 59 each contribute to the Mg(2+) site.

The protein belongs to the TRAFAC class TrmE-Era-EngA-EngB-Septin-like GTPase superfamily. EngB GTPase family. The cofactor is Mg(2+).

Its function is as follows. Necessary for normal cell division and for the maintenance of normal septation. The sequence is that of Probable GTP-binding protein EngB from Desulforapulum autotrophicum (strain ATCC 43914 / DSM 3382 / VKM B-1955 / HRM2) (Desulfobacterium autotrophicum).